The chain runs to 496 residues: Glutamyl-tRNA(Gln) amidotransferase subunit A (496 aa).

Catalysis depends on charge relay system residues lysine 79 and serine 159. The active-site Acyl-ester intermediate is serine 183.

Belongs to the amidase family. GatA subfamily. Heterotrimer of A, B and C subunits.

The catalysed reaction is L-glutamyl-tRNA(Gln) + L-glutamine + ATP + H2O = L-glutaminyl-tRNA(Gln) + L-glutamate + ADP + phosphate + H(+). Allows the formation of correctly charged Gln-tRNA(Gln) through the transamidation of misacylated Glu-tRNA(Gln) in organisms which lack glutaminyl-tRNA synthetase. The reaction takes place in the presence of glutamine and ATP through an activated gamma-phospho-Glu-tRNA(Gln). This Ruegeria pomeroyi (strain ATCC 700808 / DSM 15171 / DSS-3) (Silicibacter pomeroyi) protein is Glutamyl-tRNA(Gln) amidotransferase subunit A.